The primary structure comprises 214 residues: ATP-dependent Clp protease proteolytic subunit (214 aa).

Ser-106 acts as the Nucleophile in catalysis. Residue His-131 is part of the active site.

Belongs to the peptidase S14 family. Fourteen ClpP subunits assemble into 2 heptameric rings which stack back to back to give a disk-like structure with a central cavity, resembling the structure of eukaryotic proteasomes.

It localises to the cytoplasm. It carries out the reaction Hydrolysis of proteins to small peptides in the presence of ATP and magnesium. alpha-casein is the usual test substrate. In the absence of ATP, only oligopeptides shorter than five residues are hydrolyzed (such as succinyl-Leu-Tyr-|-NHMec, and Leu-Tyr-Leu-|-Tyr-Trp, in which cleavage of the -Tyr-|-Leu- and -Tyr-|-Trp bonds also occurs).. In terms of biological role, cleaves peptides in various proteins in a process that requires ATP hydrolysis. Has a chymotrypsin-like activity. Plays a major role in the degradation of misfolded proteins. This Rhodopseudomonas palustris (strain BisB5) protein is ATP-dependent Clp protease proteolytic subunit.